Here is a 264-residue protein sequence, read N- to C-terminus: tRNA (guanine-N(1)-)-methyltransferase (264 aa).

Residues Gly-120 and 140 to 145 (IGDYVL) contribute to the S-adenosyl-L-methionine site.

Belongs to the RNA methyltransferase TrmD family. Homodimer.

It localises to the cytoplasm. The enzyme catalyses guanosine(37) in tRNA + S-adenosyl-L-methionine = N(1)-methylguanosine(37) in tRNA + S-adenosyl-L-homocysteine + H(+). Functionally, specifically methylates guanosine-37 in various tRNAs. The protein is tRNA (guanine-N(1)-)-methyltransferase of Halorhodospira halophila (strain DSM 244 / SL1) (Ectothiorhodospira halophila (strain DSM 244 / SL1)).